We begin with the raw amino-acid sequence, 557 residues long: MDIKRSILLVALAVVSYLLVLQWNQDYGQAALPPQNAVAQSASPALPETVPGDSSTSADVPTAGSGNQVPDSAASTAGSDLIQVRTDVLEVAIDPRGGDIVQLKLPKFPRRQDHPEIPFQLFDNGSERLYLAQSGLTGTNGPDARADGRPLYVSEQRSYQLADGQDSLVVDLKFSDGGVDYVKRFTFKRGAYDLEVRHQIANHSEQPWSGNLFAQLKRDASADPSSTTATGTATYLGAALWTSEEPYRKVSMGDMDDKNLRETVQGGWVAWLQHYFVTAWVPNKDDTNLVATRKDSQGNYIIGFTGSTLNIPAGATGETVTRLYAGPKDQNQLEALSPGLELTVDYGFLWFIAQPIFWLLELIHALLGNWGWSIIVLTVIIKLAFFPLSAASYRSMGRMRAVAPKLQALKEQHGEDRQKLSQAMMELYKKEKINPLGGCLPILVQMPVFLALYWVLLESVEMRQAPWLGWITDLSVKDPYFILPIIMGATMFFQQTLNPTPPDPMQARVMKLMPIIFTFFFLWFPAGLVLYWVVNNVLSIGQQWYITRQIEKAAQLA.

Residues 7 to 27 (ILLVALAVVSYLLVLQWNQDY) traverse the membrane as a helical segment. The disordered stretch occupies residues 42–77 (ASPALPETVPGDSSTSADVPTAGSGNQVPDSAASTA). A compositionally biased stretch (polar residues) spans 52–77 (GDSSTSADVPTAGSGNQVPDSAASTA). Transmembrane regions (helical) follow at residues 370-390 (WGWS…PLSA), 436-456 (LGGC…YWVL), and 514-534 (PIIF…YWVV).

It belongs to the OXA1/ALB3/YidC family. Type 1 subfamily. In terms of assembly, interacts with the Sec translocase complex via SecD. Specifically interacts with transmembrane segments of nascent integral membrane proteins during membrane integration.

The protein resides in the cell inner membrane. In terms of biological role, required for the insertion and/or proper folding and/or complex formation of integral membrane proteins into the membrane. Involved in integration of membrane proteins that insert both dependently and independently of the Sec translocase complex, as well as at least some lipoproteins. Aids folding of multispanning membrane proteins. The protein is Membrane protein insertase YidC of Azotobacter vinelandii (strain DJ / ATCC BAA-1303).